We begin with the raw amino-acid sequence, 84 residues long: M-myrmeciitoxin-Mb2a (84 aa).

An N-terminal signal peptide occupies residues methionine 1–alanine 21. The propeptide occupies proline 22–proline 48.

The protein belongs to the formicidae venom precursor-01 superfamily. Ant pilosulin family. As to expression, expressed by the venom gland.

Its subcellular location is the secreted. Its function is as follows. Shows activity against E.coli and S.aureus (MIC&lt;6.25 uM), moderate activity against P.aeruginosa (MIC&lt;25 uM), weak activity against B.subtilis (MIC&lt;50 uM), and has no effect against L.garvieae, C.albicans, and S.cerevisiae. Has no hemolytic nor cytolytic activity. Causes an IgE-independent histamine release. The polypeptide is M-myrmeciitoxin-Mb2a (Myrmecia banksi (Jack jumper ant)).